Reading from the N-terminus, the 66-residue chain is Large ribosomal subunit protein bL32 (66 aa).

It belongs to the bacterial ribosomal protein bL32 family.

In Rickettsia akari (strain Hartford), this protein is Large ribosomal subunit protein bL32.